A 93-amino-acid chain; its full sequence is Large ribosomal subunit protein uL23cz/uL23cy (93 aa).

It belongs to the universal ribosomal protein uL23 family. As to quaternary structure, part of the 50S ribosomal subunit.

The protein localises to the plastid. It is found in the chloroplast. Its function is as follows. Binds to 23S rRNA. In Jasminum nudiflorum (Winter jasmine), this protein is Large ribosomal subunit protein uL23cz/uL23cy (rpl23-A).